The chain runs to 179 residues: Ribosome maturation factor RimM (179 aa).

The PRC barrel domain occupies 100 to 176 (HGEYHLTELI…FILLTPPSGL (77 aa)).

The protein belongs to the RimM family. As to quaternary structure, binds ribosomal protein uS19.

It localises to the cytoplasm. Functionally, an accessory protein needed during the final step in the assembly of 30S ribosomal subunit, possibly for assembly of the head region. Essential for efficient processing of 16S rRNA. May be needed both before and after RbfA during the maturation of 16S rRNA. It has affinity for free ribosomal 30S subunits but not for 70S ribosomes. The chain is Ribosome maturation factor RimM from Prochlorococcus marinus subsp. pastoris (strain CCMP1986 / NIES-2087 / MED4).